The sequence spans 165 residues: Small ribosomal subunit protein bS16 (165 aa).

The interval 84-165 (WTHGNNPEKG…EAPAEEAAEG (82 aa)) is disordered. Basic and acidic residues predominate over residues 89-130 (NPEKGKPGKKAQERLAERAQREEERKQAEADAKAAAEAEKAA). A compositionally biased stretch (low complexity) spans 131-157 (AAEAAAAAAAAPAVEEAPAEEAPAAEA).

It belongs to the bacterial ribosomal protein bS16 family.

This is Small ribosomal subunit protein bS16 from Caulobacter vibrioides (strain ATCC 19089 / CIP 103742 / CB 15) (Caulobacter crescentus).